The primary structure comprises 487 residues: ATP-dependent 6-phosphofructokinase (487 aa).

ATP contacts are provided by residues G107, 173-174 (RG), 198-201 (GDGT), and K226. D199 lines the Mg(2+) pocket. Substrate-binding positions include 227-229 (TID), 272-274 (MGR), and E325. D229 serves as the catalytic Proton acceptor. 341 to 343 (SGN) provides a ligand contact to ATP. 380-383 (YMIR) is a binding site for substrate. The short motif at 485–487 (AKL) is the Peroxisomal targeting signal element.

This sequence belongs to the phosphofructokinase type A (PFKA) family. PPi-dependent PFK group II subfamily. Atypical ATP-dependent clade 'X' sub-subfamily. Homotetramer. Mg(2+) serves as cofactor.

The protein resides in the glycosome. The enzyme catalyses beta-D-fructose 6-phosphate + ATP = beta-D-fructose 1,6-bisphosphate + ADP + H(+). It participates in carbohydrate degradation; glycolysis; D-glyceraldehyde 3-phosphate and glycerone phosphate from D-glucose: step 3/4. Its activity is regulated as follows. Allosterically activated by AMP. Its function is as follows. Catalyzes the phosphorylation of D-fructose 6-phosphate to fructose 1,6-bisphosphate by ATP, the first committing step of glycolysis. This Trypanosoma brucei brucei protein is ATP-dependent 6-phosphofructokinase.